The primary structure comprises 124 residues: Chemotaxis protein CheY1 (124 aa).

In terms of domain architecture, Response regulatory spans 2–120 (KLLVVDDSST…VLKEKLEVVL (119 aa)). Positions 7, 8, 53, and 55 each coordinate Mg(2+). A 4-aspartylphosphate modification is found at Asp-53.

Interacts (when phosphorylated) with FliM. Mg(2+) is required as a cofactor. Post-translationally, phosphorylated by CheAY. Dephosphorylated (inactivated) by CheZ.

The protein localises to the cytoplasm. Chemotactic response regulator protein that modulates the rotation direction of bacterial flagellar motors. Plays an important role in the colonization and infection of Helicobacter pylori. Upon phosphorylation by CheA, interacts with the flagellar motor protein FliM to cause clockwise flagellar rotation and bacterial reversals, as opposed to straight swimming when CheY1 is not phosphorylated. This is Chemotaxis protein CheY1 (cheY1) from Helicobacter pylori (strain J99 / ATCC 700824) (Campylobacter pylori J99).